Reading from the N-terminus, the 312-residue chain is Malate dehydrogenase (312 aa).

NAD(+)-binding positions include 12–17 (GSGFTG) and Asp36. Substrate is bound by residues Arg87 and Arg93. NAD(+) is bound by residues Asn100 and 123 to 125 (LTN). Substrate is bound at residue Asn125. Ser149 carries the post-translational modification Phosphoserine. Residue Arg156 participates in substrate binding. His180 functions as the Proton acceptor in the catalytic mechanism.

It belongs to the LDH/MDH superfamily. MDH type 3 family.

The catalysed reaction is (S)-malate + NAD(+) = oxaloacetate + NADH + H(+). In terms of biological role, catalyzes the reversible oxidation of malate to oxaloacetate. This is Malate dehydrogenase from Oceanobacillus iheyensis (strain DSM 14371 / CIP 107618 / JCM 11309 / KCTC 3954 / HTE831).